Reading from the N-terminus, the 124-residue chain is Large ribosomal subunit protein bL12 (124 aa).

The protein belongs to the bacterial ribosomal protein bL12 family. In terms of assembly, homodimer. Part of the ribosomal stalk of the 50S ribosomal subunit. Forms a multimeric L10(L12)X complex, where L10 forms an elongated spine to which 2 to 4 L12 dimers bind in a sequential fashion. Binds GTP-bound translation factors.

In terms of biological role, forms part of the ribosomal stalk which helps the ribosome interact with GTP-bound translation factors. Is thus essential for accurate translation. The sequence is that of Large ribosomal subunit protein bL12 from Borreliella afzelii (strain PKo) (Borrelia afzelii).